A 688-amino-acid chain; its full sequence is Elongation factor G (688 aa).

The tr-type G domain occupies 8–282 (EKTRNIGIMA…AIIDYLPSPM (275 aa)). GTP is bound by residues 17-24 (AHIDAGKT), 81-85 (DTPGH), and 135-138 (NKMD).

The protein belongs to the TRAFAC class translation factor GTPase superfamily. Classic translation factor GTPase family. EF-G/EF-2 subfamily.

It localises to the cytoplasm. Functionally, catalyzes the GTP-dependent ribosomal translocation step during translation elongation. During this step, the ribosome changes from the pre-translocational (PRE) to the post-translocational (POST) state as the newly formed A-site-bound peptidyl-tRNA and P-site-bound deacylated tRNA move to the P and E sites, respectively. Catalyzes the coordinated movement of the two tRNA molecules, the mRNA and conformational changes in the ribosome. In Phytoplasma mali (strain AT), this protein is Elongation factor G.